The chain runs to 245 residues: Eukaryotic translation initiation factor 6 (245 aa).

The protein belongs to the eIF-6 family. Monomer. Associates with the 60S ribosomal subunit.

The protein localises to the cytoplasm. Its subcellular location is the nucleus. It is found in the nucleolus. Functionally, binds to the 60S ribosomal subunit and prevents its association with the 40S ribosomal subunit to form the 80S initiation complex in the cytoplasm. May also be involved in ribosome biogenesis. This is Eukaryotic translation initiation factor 6 (eif6) from Danio rerio (Zebrafish).